An 86-amino-acid chain; its full sequence is Small ribosomal subunit protein bS18 (86 aa).

This sequence belongs to the bacterial ribosomal protein bS18 family. Part of the 30S ribosomal subunit. Forms a tight heterodimer with protein bS6.

Binds as a heterodimer with protein bS6 to the central domain of the 16S rRNA, where it helps stabilize the platform of the 30S subunit. The sequence is that of Small ribosomal subunit protein bS18 from Maridesulfovibrio salexigens (strain ATCC 14822 / DSM 2638 / NCIMB 8403 / VKM B-1763) (Desulfovibrio salexigens).